The following is a 356-amino-acid chain: Dihydroorotate dehydrogenase (quinone) (356 aa).

FMN contacts are provided by residues 66 to 70 (AGFDK) and Thr-90. Position 70 (Lys-70) interacts with substrate. 115–119 (NRMGF) lines the substrate pocket. Residues Asn-143 and Asn-176 each contribute to the FMN site. Asn-176 lines the substrate pocket. Residue Ser-179 is the Nucleophile of the active site. Position 181 (Asn-181) interacts with substrate. Positions 212 and 240 each coordinate FMN. 241 to 242 (NT) provides a ligand contact to substrate. FMN is bound by residues Gly-264, Gly-293, and 314-315 (YT).

Belongs to the dihydroorotate dehydrogenase family. Type 2 subfamily. In terms of assembly, monomer. The cofactor is FMN.

The protein resides in the cell membrane. It catalyses the reaction (S)-dihydroorotate + a quinone = orotate + a quinol. It participates in pyrimidine metabolism; UMP biosynthesis via de novo pathway; orotate from (S)-dihydroorotate (quinone route): step 1/1. Functionally, catalyzes the conversion of dihydroorotate to orotate with quinone as electron acceptor. The polypeptide is Dihydroorotate dehydrogenase (quinone) (pyrD) (Mycobacterium leprae (strain TN)).